Consider the following 569-residue polypeptide: Formate--tetrahydrofolate ligase (569 aa).

Residue Thr64–Thr71 coordinates ATP.

Belongs to the formate--tetrahydrofolate ligase family.

The catalysed reaction is (6S)-5,6,7,8-tetrahydrofolate + formate + ATP = (6R)-10-formyltetrahydrofolate + ADP + phosphate. Its pathway is one-carbon metabolism; tetrahydrofolate interconversion. The protein is Formate--tetrahydrofolate ligase of Shewanella sp. (strain MR-7).